The following is a 94-amino-acid chain: Small ribosomal subunit protein uS17 (94 aa).

This sequence belongs to the universal ribosomal protein uS17 family. Part of the 30S ribosomal subunit.

Its function is as follows. One of the primary rRNA binding proteins, it binds specifically to the 5'-end of 16S ribosomal RNA. This is Small ribosomal subunit protein uS17 from Deinococcus geothermalis (strain DSM 11300 / CIP 105573 / AG-3a).